The primary structure comprises 288 residues: Cell division protein ZipA (288 aa).

Residue methionine 1 is a topological domain, periplasmic. The helical transmembrane segment at glutamate 2–phenylalanine 22 threads the bilayer. At aspartate 23–arginine 288 the chain is on the cytoplasmic side. Composition is skewed to basic and acidic residues over residues lysine 66–leucine 75 and arginine 83–serine 93. A disordered region spans residues lysine 66–lysine 141. Low complexity predominate over residues glycine 106 to glycine 117.

Belongs to the ZipA family. As to quaternary structure, interacts with FtsZ via their C-terminal domains.

Its subcellular location is the cell inner membrane. Essential cell division protein that stabilizes the FtsZ protofilaments by cross-linking them and that serves as a cytoplasmic membrane anchor for the Z ring. Also required for the recruitment to the septal ring of downstream cell division proteins. The chain is Cell division protein ZipA from Pseudomonas fluorescens (strain Pf0-1).